Here is a 336-residue protein sequence, read N- to C-terminus: D-erythrose-4-phosphate dehydrogenase (336 aa).

11–12 serves as a coordination point for NAD(+); that stretch reads RI. Residues 153–155, Arg-199, 212–213, and Arg-235 each bind substrate; these read SCT and TR. Residue Cys-154 is the Nucleophile of the active site. Asn-317 provides a ligand contact to NAD(+).

Belongs to the glyceraldehyde-3-phosphate dehydrogenase family. Epd subfamily. In terms of assembly, homotetramer.

The protein resides in the cytoplasm. The enzyme catalyses D-erythrose 4-phosphate + NAD(+) + H2O = 4-phospho-D-erythronate + NADH + 2 H(+). Its pathway is cofactor biosynthesis; pyridoxine 5'-phosphate biosynthesis; pyridoxine 5'-phosphate from D-erythrose 4-phosphate: step 1/5. In terms of biological role, catalyzes the NAD-dependent conversion of D-erythrose 4-phosphate to 4-phosphoerythronate. The sequence is that of D-erythrose-4-phosphate dehydrogenase from Alteromonas mediterranea (strain DSM 17117 / CIP 110805 / LMG 28347 / Deep ecotype).